The following is a 353-amino-acid chain: Quinolinate synthase (353 aa).

The iminosuccinate site is built by His-47 and Ser-68. A [4Fe-4S] cluster-binding site is contributed by Cys-113. Iminosuccinate contacts are provided by residues 139–141 and Ser-156; that span reads YAN. Cys-200 is a [4Fe-4S] cluster binding site. Iminosuccinate contacts are provided by residues 226–228 and Thr-243; that span reads HPE. [4Fe-4S] cluster is bound at residue Cys-297.

This sequence belongs to the quinolinate synthase family. Type 1 subfamily. [4Fe-4S] cluster serves as cofactor.

The protein resides in the cytoplasm. The enzyme catalyses iminosuccinate + dihydroxyacetone phosphate = quinolinate + phosphate + 2 H2O + H(+). It functions in the pathway cofactor biosynthesis; NAD(+) biosynthesis; quinolinate from iminoaspartate: step 1/1. In terms of biological role, catalyzes the condensation of iminoaspartate with dihydroxyacetone phosphate to form quinolinate. This Photobacterium profundum (strain SS9) protein is Quinolinate synthase.